Reading from the N-terminus, the 839-residue chain is V-type proton ATPase 116 kDa subunit a 1 (839 aa).

Topologically, residues 1–395 (MGELFRSEEM…DAYGIGTYRE (395 aa)) are cytoplasmic. Phosphothreonine is present on residues T257 and T367. Y371 bears the Phosphotyrosine mark. A helical membrane pass occupies residues 396–414 (INPAPYTVITFPFLFAVMF). Topologically, residues 415-416 (GD) are vacuolar. A helical transmembrane segment spans residues 417-433 (FGHGILMTLFAVWMVLR). The Cytoplasmic portion of the chain corresponds to 434-448 (ESRILSQKHENEMFS). A helical transmembrane segment spans residues 449 to 478 (MVFSGRYIILLMGLFSIYTGLIYNDCFSKS). Over 479–542 (LNIFGSSWSV…ATNKLTFLNS (64 aa)) the chain is Vacuolar. Residues 543–562 (FKMKMSVILGIIHMLFGVSL) form a helical membrane-spanning segment. Residues 563-580 (SLFNHIYFKKPLNIYFGF) are Cytoplasmic-facing. A helical transmembrane segment spans residues 581-601 (IPEIIFMSSLFGYLVILIFYK). Topologically, residues 602–646 (WTAYDAHSSRNAPSLLIHFINMFLFSYPESGNAMLYSGQKGIQCF) are vacuolar. The chain crosses the membrane as a helical span at residues 647–666 (LIVVAMLCVPWMLLFKPLIL). Residues 667–726 (RHQYLRKKHLGTLNFGGIRVGNGPTEEDAEIIQHDQLSTHSEDAEEFDFGDTMVHQAIHT) are Cytoplasmic-facing. Residues 727–751 (IEYCLGCISNTASYLRLWALSLAHA) form a helical membrane-spanning segment. Residues 752 to 772 (QLSEVLWTMVIHIGLHVRSLA) lie on the Vacuolar side of the membrane. The helical transmembrane segment at 773–811 (GGLGLFFIFAAFATLTVAILLIMEGLSAFLHALRLHWVE) threads the bilayer. Residues 812–839 (FQNKFYTGTGFKFLPFSFEHIREGKFDE) lie on the Cytoplasmic side of the membrane.

This sequence belongs to the V-ATPase 116 kDa subunit family. In terms of assembly, V-ATPase is a heteromultimeric enzyme made up of two complexes: the ATP-hydrolytic V1 complex and the proton translocation V0 complex. The V1 complex consists of three catalytic AB heterodimers that form a heterohexamer, three peripheral stalks each consisting of EG heterodimers, one central rotor including subunits D and F, and the regulatory subunits C and H. The proton translocation complex V0 consists of the proton transport subunit a, a ring of proteolipid subunits c9c'', rotary subunit d, subunits e and f, and the accessory subunits ATP6AP1/Ac45 and ATP6AP2/PRR. Interacts with SPAAR. In terms of tissue distribution, predominantly expressed in neurons in the cortex and in the dentate gyrus, CA1 and CA3 regions of the hippocampus (at protein level). Expressed at lower levels in astrocytes, oligodendrocytes and microglia (at protein level). In the cerebellum, present in Purkinje and granule cells (at protein level).

Its subcellular location is the cytoplasmic vesicle. It is found in the clathrin-coated vesicle membrane. It localises to the secretory vesicle. The protein localises to the synaptic vesicle membrane. The protein resides in the melanosome. Its function is as follows. Subunit of the V0 complex of vacuolar(H+)-ATPase (V-ATPase), a multisubunit enzyme composed of a peripheral complex (V1) that hydrolyzes ATP and a membrane integral complex (V0) that translocates protons. V-ATPase is responsible for the acidification of various organelles, such as lysosomes, endosomes, the trans-Golgi network, and secretory granules, including synaptic vesicles. In certain cell types, can be exported to the plasma membrane, where it is involved in the acidification of the extracellular environment. Required for assembly and activity of the vacuolar ATPase. Through its action on compartment acidification, plays an essential role in neuronal development in terms of integrity and connectivity of neurons. The polypeptide is V-type proton ATPase 116 kDa subunit a 1 (Atp6v0a1) (Mus musculus (Mouse)).